The sequence spans 268 residues: Undecaprenyl-diphosphatase (268 aa).

The next 7 membrane-spanning stretches (helical) occupy residues 47–67 (FTVL…FAKL), 83–103 (FVIG…IAGK), 109–129 (LFNP…LMWV), 144–164 (FPLP…IPGV), 184–204 (AAEF…AYDF), 218–238 (TVAI…KAFL), and 246–266 (FTFF…ALAL).

The protein belongs to the UppP family.

It is found in the cell inner membrane. The catalysed reaction is di-trans,octa-cis-undecaprenyl diphosphate + H2O = di-trans,octa-cis-undecaprenyl phosphate + phosphate + H(+). Functionally, catalyzes the dephosphorylation of undecaprenyl diphosphate (UPP). Confers resistance to bacitracin. The sequence is that of Undecaprenyl-diphosphatase from Nitrobacter winogradskyi (strain ATCC 25391 / DSM 10237 / CIP 104748 / NCIMB 11846 / Nb-255).